Consider the following 150-residue polypeptide: Arginine repressor (150 aa).

It belongs to the ArgR family.

The protein localises to the cytoplasm. Its pathway is amino-acid biosynthesis; L-arginine biosynthesis [regulation]. Its function is as follows. Regulates arginine biosynthesis genes. The polypeptide is Arginine repressor (Clostridium botulinum (strain Okra / Type B1)).